The chain runs to 377 residues: DNA replication and repair protein RecF (377 aa).

An ATP-binding site is contributed by 30 to 37; the sequence is GPNGQGKT.

Belongs to the RecF family.

It is found in the cytoplasm. The RecF protein is involved in DNA metabolism; it is required for DNA replication and normal SOS inducibility. RecF binds preferentially to single-stranded, linear DNA. It also seems to bind ATP. This chain is DNA replication and repair protein RecF, found in Thermobifida fusca (strain YX).